We begin with the raw amino-acid sequence, 775 residues long: MTASTQNGSPTPPPAAPTATNQESKNMTANPADASESQSPANEKGSGTAESGQKHTSTAANAKDPLRPRRKKAKRACFACQRAHLTCGDERPCQRCIKRGLQDACHDGVRKKAKYLHDAPNEALMPGIRRNFYNQANATRTNANQQQNGPNSNSNKDSRQNVAANFYSPQSASNFDVYTQAKSQQGQGHIPPTVMQDTSINPSAFQAPSPTSTPNFDLSSNPPNRNLSSAMTQTPSSASNQTQDPFGAAFFDPSHPALFNFDIASMNFGNRYGALEFGMLGHMATGAGDTPPSDSATQRGSIGRSSGTFTAQNFGDSTNTQSPFLFGDPVLNDWNPSGQSQTNPRNNNIYNQNTVAGQMGEQHPNAFAIESAPMNFASPGSTESPQMTTMNQFDEANAKFSSRTALMHQTNPHQPPPISTPGLKHQGFQVGVKRRYRSPSSIYESVKEPYSYTSGFHNLTAFIQRRFSPQKTLQIAKALASIRPSFIATTKTLNQDDLIFMEKCFQRTLWEYEDFINACGTPTIVCRRTGEIAAVGKEFSILTGWKKEVLLGKEPNLNVNTGGSSPRGSGTFTPRNGNGVDPHSGMSAAGGGGGRTQPVFLAELLDDDSVIEFYEDFAKLAFGDSRGSVMTTCKLLKYKTKEDSAALFQGKEAQQGGSDGKGGGGGGDVAATAATTSTSTSNGANSSGHANANRNNTNPKNSSPPSSSSAAAAGPLHGAQLSPKQTWGKRGIAGEAGMNQLGFRDGKVECSYCWTVKRDVFDIPMLIVMNFLPCI.

The interval 1-70 is disordered; sequence MTASTQNGSP…NAKDPLRPRR (70 aa). Composition is skewed to polar residues over residues 21 to 41 and 48 to 60; these read NQESKNMTANPADASESQSPA and TAESGQKHTSTAA. The segment at residues 77-105 is a DNA-binding region (zn(2)-C6 fungal-type); sequence CFACQRAHLTCGDERPCQRCIKRGLQDAC. Disordered regions lie at residues 179 to 248, 286 to 351, 556 to 592, and 649 to 725; these read TQAK…PFGA, GAGD…NIYN, NLNVNTGGSSPRGSGTFTPRNGNGVDPHSGMSAAGGG, and QGKE…SPKQ. Polar residues predominate over residues 195–217; it reads MQDTSINPSAFQAPSPTSTPNFD. Over residues 218-229 the composition is skewed to low complexity; the sequence is LSSNPPNRNLSS. 4 stretches are compositionally biased toward polar residues: residues 230–244, 292–323, 334–351, and 557–576; these read AMTQTPSSASNQTQD, PSDSATQRGSIGRSSGTFTAQNFGDSTNTQSP, WNPSGQSQTNPRNNNIYN, and LNVNTGGSSPRGSGTFTPRN. Residues 657-668 show a composition bias toward gly residues; the sequence is GSDGKGGGGGGD. Residues 669–713 are compositionally biased toward low complexity; that stretch reads VAATAATTSTSTSNGANSSGHANANRNNTNPKNSSPPSSSSAAAA.

This sequence belongs to the ERT1/acuK family.

The protein resides in the nucleus. Transcription factor which regulates nonfermentable carbon utilization. Activator of gluconeogenetic genes. This chain is Transcription activator of gluconeogenesis HCBG_00867, found in Ajellomyces capsulatus (strain G186AR / H82 / ATCC MYA-2454 / RMSCC 2432) (Darling's disease fungus).